We begin with the raw amino-acid sequence, 458 residues long: ATP synthase subunit beta (458 aa).

148–155 (GGAGVGKT) provides a ligand contact to ATP.

This sequence belongs to the ATPase alpha/beta chains family. As to quaternary structure, F-type ATPases have 2 components, CF(1) - the catalytic core - and CF(0) - the membrane proton channel. CF(1) has five subunits: alpha(3), beta(3), gamma(1), delta(1), epsilon(1). CF(0) has three main subunits: a(1), b(2) and c(9-12). The alpha and beta chains form an alternating ring which encloses part of the gamma chain. CF(1) is attached to CF(0) by a central stalk formed by the gamma and epsilon chains, while a peripheral stalk is formed by the delta and b chains.

Its subcellular location is the cell inner membrane. The catalysed reaction is ATP + H2O + 4 H(+)(in) = ADP + phosphate + 5 H(+)(out). In terms of biological role, produces ATP from ADP in the presence of a proton gradient across the membrane. The catalytic sites are hosted primarily by the beta subunits. The chain is ATP synthase subunit beta from Pseudomonas putida (strain ATCC 700007 / DSM 6899 / JCM 31910 / BCRC 17059 / LMG 24140 / F1).